The chain runs to 63 residues: Metallothionein (63 aa).

The segment at 1–30 is beta; it reads MDPQDCTCAAGDSCSCAGSCKCKNCRCRSC. Residues C6, C8, C14, C16, C20, C22, C25, C27, C30, C34, C35, C37, C38, C42, C45, C49, C51, C59, C61, and C62 each contribute to the a divalent metal cation site. The tract at residues 31–63 is alpha; it reads RKSCCSCCPAGCNNCAKGCVCKEPASSKCSCCH.

This sequence belongs to the metallothionein superfamily. Type 1 family.

In terms of biological role, metallothioneins have a high content of cysteine residues that bind various heavy metals. The sequence is that of Metallothionein from Anas platyrhynchos (Mallard).